A 247-amino-acid polypeptide reads, in one-letter code: 2,3-bisphosphoglycerate-dependent phosphoglycerate mutase (247 aa).

Substrate contacts are provided by residues 8–15, 21–22, arginine 60, 87–90, lysine 98, 114–115, and 183–184; these read RHGESVWN, TG, ERHY, RR, and GN. Histidine 9 (tele-phosphohistidine intermediate) is an active-site residue. Glutamate 87 functions as the Proton donor/acceptor in the catalytic mechanism.

The protein belongs to the phosphoglycerate mutase family. BPG-dependent PGAM subfamily.

It catalyses the reaction (2R)-2-phosphoglycerate = (2R)-3-phosphoglycerate. The protein operates within carbohydrate degradation; glycolysis; pyruvate from D-glyceraldehyde 3-phosphate: step 3/5. Functionally, catalyzes the interconversion of 2-phosphoglycerate and 3-phosphoglycerate. In Thermobifida fusca (strain YX), this protein is 2,3-bisphosphoglycerate-dependent phosphoglycerate mutase.